The sequence spans 522 residues: Sugar transport protein MST2 (522 aa).

The Cytoplasmic portion of the chain corresponds to 1–24; sequence MAAATAADVAEDTASVYSGKLTLY. Residues 25–45 traverse the membrane as a helical segment; sequence VFLTCGVAATGGLIIGYDIGI. Topologically, residues 46–82 are extracellular; sequence SGGVTSMDTFLGKFFPSVLHQEQTAQGTSQYCKFNSQ. Residues 83–103 form a helical membrane-spanning segment; sequence PLTAFTSSLYLAALVASFFVA. Residues 104–111 are Cytoplasmic-facing; that stretch reads SFTRALGR. The helical transmembrane segment at 112 to 132 threads the bilayer; that stretch reads KWSMFGGGVSFLAGATLNGAA. The Extracellular portion of the chain corresponds to 133–134; that stretch reads RN. The helical transmembrane segment at 135–155 threads the bilayer; that stretch reads VAMLIVGRILLGIGVAFCGLS. Residues 156 to 169 lie on the Cytoplasmic side of the membrane; that stretch reads TPIYLSEMAPPRLR. A helical transmembrane segment spans residues 170–190; it reads GMLNIGLQLMITVGIFSANLV. Topologically, residues 191–204 are extracellular; sequence NYGAAKIRGGWGWR. Residues 205-225 form a helical membrane-spanning segment; the sequence is VSLGLAAAPACVIAVGSLFLP. Residues 226 to 291 are Cytoplasmic-facing; the sequence is DSPSSLINRG…DVLQRRYRPQ (66 aa). A helical membrane pass occupies residues 292–312; sequence LAMAVLIPFFQQLTGINVIMF. Topologically, residues 313–329 are extracellular; the sequence is YAPVLFKTIGLGGDASL. Residues 330 to 350 traverse the membrane as a helical segment; the sequence is MSAVITGLVNIVATFVSIATV. Residues 351–361 are Cytoplasmic-facing; that stretch reads DSLGRRKLLFQ. A helical transmembrane segment spans residues 362–382; that stretch reads GGCQMLVSQVIIGTLIGVVFG. Residues 383–391 lie on the Extracellular side of the membrane; sequence TSGDGNISR. A helical membrane pass occupies residues 392–412; the sequence is ALAVCIVVFICVYVAGFAWSW. The Cytoplasmic segment spans residues 413–434; sequence GPLGVLLPSEIFPLEVRPAGQS. Residues 435-455 form a helical membrane-spanning segment; that stretch reads ISVAVNMLCTFAVAEAFLPML. The Extracellular portion of the chain corresponds to 456-459; that stretch reads CHMR. Residues 460–480 form a helical membrane-spanning segment; the sequence is FGLFYFFSGWVLVMTLFVSAF. The Cytoplasmic segment spans residues 481 to 522; it reads LPETKGVPIEKMTVVWRTHWFWGRFYCNQDADAHVQVANSKV.

It belongs to the major facilitator superfamily. Sugar transporter (TC 2.A.1.1) family.

Its subcellular location is the membrane. Mediates active uptake of hexoses by sugar:proton symport. Can transport glucose. The chain is Sugar transport protein MST2 from Oryza sativa subsp. japonica (Rice).